The primary structure comprises 694 residues: Elongation factor G 2 (694 aa).

Residues 5 to 280 form the tr-type G domain; sequence SKYRNIGIFA…AVVDYLPSPT (276 aa). Residues 14-21, 78-82, and 132-135 contribute to the GTP site; these read AHVDAGKT, DTPGH, and NKLD.

It belongs to the TRAFAC class translation factor GTPase superfamily. Classic translation factor GTPase family. EF-G/EF-2 subfamily.

The protein localises to the cytoplasm. Its function is as follows. Catalyzes the GTP-dependent ribosomal translocation step during translation elongation. During this step, the ribosome changes from the pre-translocational (PRE) to the post-translocational (POST) state as the newly formed A-site-bound peptidyl-tRNA and P-site-bound deacylated tRNA move to the P and E sites, respectively. Catalyzes the coordinated movement of the two tRNA molecules, the mRNA and conformational changes in the ribosome. The chain is Elongation factor G 2 from Pseudoalteromonas translucida (strain TAC 125).